The following is a 1098-amino-acid chain: Gramicidin S synthase 1 (1098 aa).

The region spanning 538 to 612 (APRNEIEETL…QLVHYIKDSK (75 aa)) is the Carrier domain. Ser573 is subject to O-(pantetheine 4'-phosphoryl)serine.

The protein belongs to the ATP-dependent AMP-binding enzyme family. Large multienzyme complex of GrsA and GrsB. Requires pantetheine 4'-phosphate as cofactor.

It carries out the reaction L-phenylalanine + ATP + H2O = D-phenylalanine + AMP + diphosphate + H(+). It participates in antibiotic biosynthesis; gramicidin S biosynthesis. Its function is as follows. In the first step of peptide synthesis this enzyme activates phenylalanine and racemizes it to the D-isomer. The polypeptide is Gramicidin S synthase 1 (grsA) (Brevibacillus brevis (Bacillus brevis)).